Here is a 353-residue protein sequence, read N- to C-terminus: Bone morphogenetic protein 2 (353 aa).

The propeptide occupies 1–239 (GSLKRPEDLL…GHPLHKREKR (239 aa)). N-linked (GlcNAc...) asparagine glycans are attached at residues Asn-91, Asn-121, and Asn-157. A disordered region spans residues 228–248 (GKGHPLHKREKRQAKHKQRKR). A compositionally biased stretch (basic residues) spans 231 to 248 (HPLHKREKRQAKHKQRKR). Intrachain disulfides connect Cys-253–Cys-318, Cys-282–Cys-350, and Cys-286–Cys-352. A glycan (N-linked (GlcNAc...) asparagine) is linked at Asn-295.

It belongs to the TGF-beta family. As to quaternary structure, homodimer; disulfide-linked.

The protein resides in the secreted. Its function is as follows. Negatively regulates the structure and function of the limb apical ectodermal ridge. The chain is Bone morphogenetic protein 2 (BMP2) from Gallus gallus (Chicken).